The sequence spans 439 residues: Xylose isomerase (439 aa).

Active-site residues include histidine 103 and aspartate 106. Glutamate 234, glutamate 270, histidine 273, aspartate 298, aspartate 309, aspartate 311, and aspartate 341 together coordinate Mg(2+).

Belongs to the xylose isomerase family. In terms of assembly, homotetramer. Mg(2+) is required as a cofactor.

Its subcellular location is the cytoplasm. It catalyses the reaction alpha-D-xylose = alpha-D-xylulofuranose. The chain is Xylose isomerase from Bacteroides fragilis (strain ATCC 25285 / DSM 2151 / CCUG 4856 / JCM 11019 / LMG 10263 / NCTC 9343 / Onslow / VPI 2553 / EN-2).